The sequence spans 200 residues: Adenylyl-sulfate kinase (200 aa).

Residue 35–42 (GLPASGKS) coordinates ATP. Residue Ser109 is the Phosphoserine intermediate of the active site.

Belongs to the APS kinase family.

It catalyses the reaction adenosine 5'-phosphosulfate + ATP = 3'-phosphoadenylyl sulfate + ADP + H(+). It functions in the pathway sulfur metabolism; hydrogen sulfide biosynthesis; sulfite from sulfate: step 2/3. In terms of biological role, catalyzes the synthesis of activated sulfate. The sequence is that of Adenylyl-sulfate kinase from Thermodesulfovibrio yellowstonii (strain ATCC 51303 / DSM 11347 / YP87).